A 625-amino-acid chain; its full sequence is uncharacterized protein (625 aa).

Positions 23-51 (CLACRRKKLKCDHGRPCSNCLKRSTIQSC) form a DNA-binding region, zn(2)-C6 fungal-type. Residues 93–113 (GTKSQSDYENQQSHNLPSTPS) show a composition bias toward polar residues. The tract at residues 93 to 119 (GTKSQSDYENQQSHNLPSTPSADAETQ) is disordered.

The protein resides in the nucleus. Its subcellular location is the cytoplasm. The protein localises to the cytoskeleton. It is found in the spindle. This is an uncharacterized protein from Schizosaccharomyces pombe (strain 972 / ATCC 24843) (Fission yeast).